The following is a 364-amino-acid chain: DNA polymerase IV (364 aa).

The UmuC domain maps to 14 to 198 (IIHIDMDAFF…LPVEKFHGVG (185 aa)). Positions 18 and 116 each coordinate Mg(2+). Glutamate 117 is an active-site residue.

The protein belongs to the DNA polymerase type-Y family. In terms of assembly, monomer. The cofactor is Mg(2+).

It is found in the cytoplasm. The enzyme catalyses DNA(n) + a 2'-deoxyribonucleoside 5'-triphosphate = DNA(n+1) + diphosphate. Functionally, poorly processive, error-prone DNA polymerase involved in untargeted mutagenesis. Copies undamaged DNA at stalled replication forks, which arise in vivo from mismatched or misaligned primer ends. These misaligned primers can be extended by PolIV. Exhibits no 3'-5' exonuclease (proofreading) activity. May be involved in translesional synthesis, in conjunction with the beta clamp from PolIII. The polypeptide is DNA polymerase IV (Lactococcus lactis subsp. cremoris (strain SK11)).